Consider the following 665-residue polypeptide: Long chain acyl-CoA synthetase 3 (665 aa).

Residue 228–239 (IMYTSGTTGDPK) coordinates ATP. Positions 495–519 (DGWLHTGDVGEWQPDGAMKIIDRKK) are fatty acid-binding.

It belongs to the ATP-dependent AMP-binding enzyme family. Mg(2+) serves as cofactor.

The catalysed reaction is a long-chain fatty acid + ATP + CoA = a long-chain fatty acyl-CoA + AMP + diphosphate. It functions in the pathway lipid metabolism; fatty acid metabolism. Functionally, activation of long-chain fatty acids for both synthesis of cellular lipids, and degradation via beta-oxidation. Preferentially uses palmitate, palmitoleate, oleate and linoleate. The chain is Long chain acyl-CoA synthetase 3 (LACS3) from Arabidopsis thaliana (Mouse-ear cress).